We begin with the raw amino-acid sequence, 259 residues long: Ribosomal RNA small subunit methyltransferase J (259 aa).

S-adenosyl-L-methionine is bound by residues 101–102 (RD), 117–118 (ER), 153–154 (SS), and D176.

The protein belongs to the methyltransferase superfamily. RsmJ family.

The protein localises to the cytoplasm. The catalysed reaction is guanosine(1516) in 16S rRNA + S-adenosyl-L-methionine = N(2)-methylguanosine(1516) in 16S rRNA + S-adenosyl-L-homocysteine + H(+). Functionally, specifically methylates the guanosine in position 1516 of 16S rRNA. This is Ribosomal RNA small subunit methyltransferase J from Vibrio campbellii (strain ATCC BAA-1116).